The sequence spans 186 residues: Protein FAM9B (186 aa).

The interval 1 to 93 (MAAWGKKHAG…KHALRKKQLK (93 aa)) is disordered. Basic and acidic residues-rich tracts occupy residues 10–27 (GKDPVRDECEERNRFTET) and 34–58 (DEHGEREPFAETDEHTGANTKKPED). A compositionally biased stretch (basic residues) spans 66–93 (KRKRMKMDKTCSKTKNKSKHALRKKQLK).

It belongs to the XLR/SYCP3 family. As to expression, expressed in testis and ovary (at protein level).

The protein localises to the nucleus. Its subcellular location is the cytoplasm. It is found in the chromosome. Functionally, may play a role in meiosis. The polypeptide is Protein FAM9B (Homo sapiens (Human)).